The chain runs to 440 residues: Ribosomal protein uS12 methylthiotransferase RimO (440 aa).

One can recognise an MTTase N-terminal domain in the interval 5-116; it reads PTIAISHLGC…IVNVIERAEQ (112 aa). Cys-14, Cys-50, Cys-79, Cys-154, Cys-158, and Cys-161 together coordinate [4Fe-4S] cluster. Positions 140–370 constitute a Radical SAM core domain; the sequence is TTTEGVAYLR…ALQQPISWRK (231 aa). The 67-residue stretch at 372-438 folds into the TRAM domain; that stretch reads QQEVGKTVEV…EYDLFGQVVS (67 aa).

This sequence belongs to the methylthiotransferase family. RimO subfamily. Requires [4Fe-4S] cluster as cofactor.

The protein localises to the cytoplasm. The catalysed reaction is L-aspartate(89)-[ribosomal protein uS12]-hydrogen + (sulfur carrier)-SH + AH2 + 2 S-adenosyl-L-methionine = 3-methylsulfanyl-L-aspartate(89)-[ribosomal protein uS12]-hydrogen + (sulfur carrier)-H + 5'-deoxyadenosine + L-methionine + A + S-adenosyl-L-homocysteine + 2 H(+). Catalyzes the methylthiolation of an aspartic acid residue of ribosomal protein uS12. The protein is Ribosomal protein uS12 methylthiotransferase RimO of Trichormus variabilis (strain ATCC 29413 / PCC 7937) (Anabaena variabilis).